We begin with the raw amino-acid sequence, 831 residues long: Cadherin-related family member 5 (831 aa).

Positions 1-28 are cleaved as a signal peptide; that stretch reads MGAPALLWPSLLLPWLTVLFGQPPGTLA. Topologically, residues 29-641 are extracellular; the sequence is QTQVCSVNQT…GQRFSTVDMA (613 aa). Asparagine 36, asparagine 45, asparagine 84, asparagine 135, asparagine 143, asparagine 173, asparagine 201, asparagine 287, asparagine 311, asparagine 408, and asparagine 475 each carry an N-linked (GlcNAc...) asparagine glycan. Cadherin domains are found at residues 53–125, 128–240, 252–357, and 358–459; these read VNIF…DNAP, SFEI…TPWF, IHAQ…PLQF, and SQSL…ERER. The interval 452-632 is disordered; sequence IQVSERERTP…STGAGEQGDG (181 aa). Residues 473-491 are compositionally biased toward polar residues; that stretch reads SSNTTMEAPLTSGTSQRPA. Positions 505–540 are enriched in low complexity; it reads GGTTLRPPTPASSIPGGSPTLGTSTSPQTTTPGGDS. The span at 541–554 shows a compositional bias: polar residues; sequence AQTPKPGTSHPTAP. A run of 2 repeats spans residues 541–571 and 572–602. Residues 541-614 are 3 X 31 AA approximate tandem repeats; the sequence is AQTPKPGTSH…TPKPGTSQST (74 aa). Positions 555–572 are enriched in low complexity; sequence TSRTSTSLMTTSSRSDST. Composition is skewed to polar residues over residues 573 to 582 and 589 to 623; these read QTPKPGTSQP and ASTS…SLPS. A 3; truncated repeat occupies 605 to 614; the sequence is TPKPGTSQST. The chain crosses the membrane as a helical span at residues 642–662; sequence VLGGVLGALLLLALICLVILV. Residues 663–831 lie on the Cytoplasmic side of the membrane; sequence HKHYRHRLAC…FGVDADNTYI (169 aa). Positions 663–831 are mediates interaction with USH1C and MYO7B and is required for proper localization to microvilli tips and function in microvilli organization; it reads HKHYRHRLAC…FGVDADNTYI (169 aa). 2 disordered regions span residues 675–774 and 793–831; these read GKAS…GGYK and EPTA…NTYI. Phosphoserine occurs at positions 699, 721, and 725. A compositionally biased stretch (pro residues) spans 716–738; it reads PLRPPSPMSSSPTPPSSTPPSPQ. The residue at position 728 (threonine 728) is a Phosphothreonine. Phosphoserine occurs at positions 736 and 753. The segment covering 761–771 has biased composition (basic and acidic residues); sequence LTKERRPEGEG. Position 795 is a phosphothreonine (threonine 795). Over residues 797 to 807 the composition is skewed to low complexity; the sequence is DVDSASASGSE. Residues serine 802, serine 804, and serine 806 each carry the phosphoserine modification.

In terms of assembly, part of the IMAC/intermicrovillar adhesion complex/intermicrovillar tip-link complex composed of ANKS4B, MYO7B, USH1C, CDHR2 and CDHR5. Interacts (via cytoplasmic domain) with USH1C and MYO7B; required for proper localization of CDHR5 to microvilli tips and its function in brush border differentiation. In terms of processing, N- and O-glycosylated.

Its subcellular location is the apical cell membrane. The protein localises to the cell projection. It is found in the microvillus membrane. Intermicrovillar adhesion molecule that forms, via its extracellular domain, calcium-dependent heterophilic complexes with CDHR2 on adjacent microvilli. Thereby, controls the packing of microvilli at the apical membrane of epithelial cells. Through its cytoplasmic domain, interacts with microvillus cytoplasmic proteins to form the intermicrovillar adhesion complex/IMAC. This complex plays a central role in microvilli and epithelial brush border differentiation. The protein is Cadherin-related family member 5 of Mus musculus (Mouse).